The sequence spans 748 residues: MSNEAKCPFNHTAGSGTTNQDWWPKRLRLELLSQHSAKTNPLDPDFDYAKAFNSLDLAAVKQDLAKLMTDSQDWWPADFGHYGPLFIRMAWHSAGTYRVGDGRGGAGRGQQRFAPLNSWPDNVSLDKARRLLWPIKKKYGNKISWADLFILTGNVALETMGFKTFGFGGGREDTWEPDQDVYWGDEKTWLGGDLRYGKNEAQPVADKAGHGKEHGRTDGGRNLENPLAAVQMGLIYVNPEGPDGNPDPQASAHDIRETFARMAMNDEETVALIAGGHTFGKTHGAGPADNVGPEPEAAELENQGLGWKNSFGTGKGSDTITSGLEVTWTSTPTKWSNNFFWNLFGYEWELTKSPAGAHQWIPKHGAGAGSVPDAHDPSKRHVPSMLTSDIALRVDPAYEKIARRFFENPDEFADAFARAWFKLTHRDMGPRVRYLGPEVPAEDLIWQDPIPKVNHPLVDDQDVAALKQKVLASGLSVSELVSTAWASASTFRGSDKRGGANGARIRLAPQKDWAVNQPEQLAKVLKVLEGIQADFNGKQSGGKKVSLADLIVLAGCAAIEQAAGQAGHKVTVPFTAGRMDASQEQTDVASFAPLEPVHDGFRNFLKSRYDVPAEHLLIDRAQLLTLTAPEMTVLIGGLRVLDVHTDKEKHGVFTDRPGVLTNDFFRNLIDMGTEWKPSSPARESFTGHDRKTGKQKWTASRVDLVFGSNSQLRALSEVYASDDAQDKFVRDFIAAWTKVMNLDRFDLK.

Positions 91–236 (WHSAGTYRVG…LAAVQMGLIY (146 aa)) form a cross-link, tryptophyl-tyrosyl-methioninium (Trp-Tyr) (with M-262). His92 acts as the Proton acceptor in catalysis. The interval 201–223 (AQPVADKAGHGKEHGRTDGGRNL) is disordered. Residues 207–221 (KAGHGKEHGRTDGGR) show a composition bias toward basic and acidic residues. Positions 236–262 (YVNPEGPDGNPDPQASAHDIRETFARM) form a cross-link, tryptophyl-tyrosyl-methioninium (Tyr-Met) (with W-91). A heme b-binding site is contributed by His277.

The protein belongs to the peroxidase family. Peroxidase/catalase subfamily. Homodimer or homotetramer. The cofactor is heme b. Formation of the three residue Trp-Tyr-Met cross-link is important for the catalase, but not the peroxidase activity of the enzyme.

The enzyme catalyses H2O2 + AH2 = A + 2 H2O. It catalyses the reaction 2 H2O2 = O2 + 2 H2O. Bifunctional enzyme with both catalase and broad-spectrum peroxidase activity. The chain is Catalase-peroxidase from Bordetella avium (strain 197N).